A 209-amino-acid polypeptide reads, in one-letter code: Outer-membrane lipoprotein carrier protein (209 aa).

The N-terminal stretch at 1-21 (MHRQLRYAVLATALFASTAFA) is a signal peptide.

The protein belongs to the LolA family. As to quaternary structure, monomer.

The protein resides in the periplasm. Its function is as follows. Participates in the translocation of lipoproteins from the inner membrane to the outer membrane. Only forms a complex with a lipoprotein if the residue after the N-terminal Cys is not an aspartate (The Asp acts as a targeting signal to indicate that the lipoprotein should stay in the inner membrane). This Xanthomonas oryzae pv. oryzae (strain MAFF 311018) protein is Outer-membrane lipoprotein carrier protein.